Here is a 131-residue protein sequence, read N- to C-terminus: MLEVTLPGEGTPPAEGFRTLHSLKRDLERYFRGYPVDFDDVPVRINVSGKPREVLELVREIPYGTVVTYGDIAQKANTHPRVVGVSLARNRVPIIVACHRVVAADGLGGFRWGLEWKRRLLELEGALPSRR.

Cysteine 98 (nucleophile; methyl group acceptor) is an active-site residue.

This sequence belongs to the MGMT family.

The protein resides in the cytoplasm. The enzyme catalyses a 6-O-methyl-2'-deoxyguanosine in DNA + L-cysteinyl-[protein] = S-methyl-L-cysteinyl-[protein] + a 2'-deoxyguanosine in DNA. It catalyses the reaction a 4-O-methyl-thymidine in DNA + L-cysteinyl-[protein] = a thymidine in DNA + S-methyl-L-cysteinyl-[protein]. Involved in the cellular defense against the biological effects of O6-methylguanine (O6-MeG) and O4-methylthymine (O4-MeT) in DNA. Repairs the methylated nucleobase in DNA by stoichiometrically transferring the methyl group to a cysteine residue in the enzyme. This is a suicide reaction: the enzyme is irreversibly inactivated. The polypeptide is Methylated-DNA--protein-cysteine methyltransferase (ogt) (Methanopyrus kandleri (strain AV19 / DSM 6324 / JCM 9639 / NBRC 100938)).